Here is a 637-residue protein sequence, read N- to C-terminus: Glutamate--cysteine ligase catalytic subunit (637 aa).

At methionine 1 the chain carries N-acetylmethionine. A phosphoserine mark is found at serine 5 and serine 8.

The protein belongs to the glutamate--cysteine ligase type 3 family. In terms of assembly, heterodimer of a catalytic heavy chain and a regulatory light chain. In terms of tissue distribution, most abundant in kidney. Also found in liver and testis.

It catalyses the reaction L-cysteine + L-glutamate + ATP = gamma-L-glutamyl-L-cysteine + ADP + phosphate + H(+). The catalysed reaction is (2S)-2-aminobutanoate + L-glutamate + ATP = gamma-L-glutamyl-(2S)-2-aminobutanoate + ADP + phosphate + H(+). The protein operates within sulfur metabolism; glutathione biosynthesis; glutathione from L-cysteine and L-glutamate: step 1/2. With respect to regulation, feedback inhibition by glutathione. Its function is as follows. Catalyzes the ATP-dependent ligation of L-glutamate and L-cysteine and participates in the first and rate-limiting step in glutathione biosynthesis. In Rattus norvegicus (Rat), this protein is Glutamate--cysteine ligase catalytic subunit.